The chain runs to 77 residues: Conotoxin G11.1 (77 aa).

Positions 1–20 (MKLFLAIVLILMLQFLSTGA) are cleaved as a signal peptide. Residues 21–45 (ETSDNHASRSTTALRDWLLGPKAKR) constitute a propeptide that is removed on maturation. Disulfide bonds link Cys-46–Cys-60, Cys-53–Cys-65, Cys-59–Cys-69, and Cys-64–Cys-76.

The protein belongs to the conotoxin I3 superfamily. In terms of tissue distribution, expressed by the venom duct.

The protein resides in the secreted. In terms of biological role, may embed in the membrane and bind to the voltage sensor domain of a ion channel. Does not induce paralysis when injected in fish, leading to the hypothesis that it may be part of the sedative nirvana cabal. The protein is Conotoxin G11.1 of Conus geographus (Geography cone).